The primary structure comprises 583 residues: Pyruvate kinase isozyme A, chloroplastic (583 aa).

The N-terminal 74 residues, 1-74 (MSQSLHFSPN…NSGVLYNNNN (74 aa)), are a transit peptide targeting the chloroplast. Residues 43–52 (KASTSPSSSS) show a composition bias toward low complexity. A disordered region spans residues 43-75 (KASTSPSSSSDPQVLVADNGTGNSGVLYNNNNK). Residues 62–75 (GTGNSGVLYNNNNK) are compositionally biased toward polar residues. A substrate-binding site is contributed by Arg134. 3 residues coordinate K(+): Asn136, Asp168, and Thr169. 136-139 (NMCH) lines the ATP pocket. Position 333 (Glu333) interacts with Mg(2+). Residues Gly356, Asp357, and Ser389 each coordinate substrate. Asp357 is a Mg(2+) binding site.

The protein belongs to the pyruvate kinase family. As to quaternary structure, oligomer of alpha and beta subunits. Requires Mg(2+) as cofactor. The cofactor is K(+).

The protein localises to the plastid. It is found in the chloroplast. It catalyses the reaction pyruvate + ATP = phosphoenolpyruvate + ADP + H(+). It participates in carbohydrate degradation; glycolysis; pyruvate from D-glyceraldehyde 3-phosphate: step 5/5. The polypeptide is Pyruvate kinase isozyme A, chloroplastic (Ricinus communis (Castor bean)).